A 708-amino-acid polypeptide reads, in one-letter code: Exocyst complex component 5 (708 aa).

At alanine 2 the chain carries N-acetylalanine. A coiled-coil region spans residues 40–101 (KRLLEEFVNH…AFQHFQELDE (62 aa)). Threonine 122, threonine 395, and threonine 405 each carry phosphothreonine. Serine 412 carries the phosphoserine modification.

Belongs to the SEC10 family. The exocyst complex is composed of EXOC1, EXOC2, EXOC3, EXOC4, EXOC5, EXOC6, EXOC7 and EXOC8. Interacts with EXOC3L1. In terms of tissue distribution, ubiquitous.

It is found in the cytoplasm. The protein resides in the midbody. In terms of biological role, component of the exocyst complex involved in the docking of exocytic vesicles with fusion sites on the plasma membrane. This Homo sapiens (Human) protein is Exocyst complex component 5 (EXOC5).